Here is a 298-residue protein sequence, read N- to C-terminus: Acetylglutamate kinase (298 aa).

Substrate is bound by residues 61–62 (GG), Arg83, and Asn188.

Belongs to the acetylglutamate kinase family. ArgB subfamily.

It localises to the cytoplasm. It catalyses the reaction N-acetyl-L-glutamate + ATP = N-acetyl-L-glutamyl 5-phosphate + ADP. It functions in the pathway amino-acid biosynthesis; L-arginine biosynthesis; N(2)-acetyl-L-ornithine from L-glutamate: step 2/4. Functionally, catalyzes the ATP-dependent phosphorylation of N-acetyl-L-glutamate. In Syntrophobacter fumaroxidans (strain DSM 10017 / MPOB), this protein is Acetylglutamate kinase.